The chain runs to 165 residues: ATP synthase subunit b (165 aa).

A helical membrane pass occupies residues 7–27 (GTSLGNLLIVTGSFILLLLLV).

This sequence belongs to the ATPase B chain family. As to quaternary structure, F-type ATPases have 2 components, F(1) - the catalytic core - and F(0) - the membrane proton channel. F(1) has five subunits: alpha(3), beta(3), gamma(1), delta(1), epsilon(1). F(0) has three main subunits: a(1), b(2) and c(10-14). The alpha and beta chains form an alternating ring which encloses part of the gamma chain. F(1) is attached to F(0) by a central stalk formed by the gamma and epsilon chains, while a peripheral stalk is formed by the delta and b chains.

The protein localises to the cell membrane. Its function is as follows. F(1)F(0) ATP synthase produces ATP from ADP in the presence of a proton or sodium gradient. F-type ATPases consist of two structural domains, F(1) containing the extramembraneous catalytic core and F(0) containing the membrane proton channel, linked together by a central stalk and a peripheral stalk. During catalysis, ATP synthesis in the catalytic domain of F(1) is coupled via a rotary mechanism of the central stalk subunits to proton translocation. Functionally, component of the F(0) channel, it forms part of the peripheral stalk, linking F(1) to F(0). This chain is ATP synthase subunit b, found in Streptococcus mutans serotype c (strain ATCC 700610 / UA159).